Here is a 557-residue protein sequence, read N- to C-terminus: Copine-4 (557 aa).

C2 domains follow at residues Lys-3–Leu-131 and Thr-137–Glu-264. Ca(2+) contacts are provided by Asp-170, Asp-176, Asp-232, Asp-234, and Asp-240. A VWFA domain is found at Gln-305 to Pro-507.

The protein belongs to the copine family. Interacts (via VWFA domain) with ACTB, BCOR, BICD2, CCDC22, CDC42BPB, CEP162, MYCBP2, NONO, PDCD6, PITPNM2, RDX, SKIL, SKT, SPTBN1, UBE2O and WTAP. Ca(2+) is required as a cofactor.

Functionally, probable calcium-dependent phospholipid-binding protein that may play a role in calcium-mediated intracellular processes. The chain is Copine-4 from Mus musculus (Mouse).